The sequence spans 178 residues: Acireductone dioxygenase 1 (178 aa).

Fe(2+)-binding residues include H84, H86, E90, and H130. Ni(2+) contacts are provided by H84, H86, E90, and H130.

Belongs to the acireductone dioxygenase (ARD) family. The cofactor is Fe(2+). Ni(2+) serves as cofactor.

The protein resides in the cytoplasm. The protein localises to the nucleus. It catalyses the reaction 1,2-dihydroxy-5-(methylsulfanyl)pent-1-en-3-one + O2 = 4-methylsulfanyl-2-oxobutanoate + formate + 2 H(+). It carries out the reaction 1,2-dihydroxy-5-(methylsulfanyl)pent-1-en-3-one + O2 = 3-(methylsulfanyl)propanoate + CO + formate + 2 H(+). The protein operates within amino-acid biosynthesis; L-methionine biosynthesis via salvage pathway; L-methionine from S-methyl-5-thio-alpha-D-ribose 1-phosphate: step 5/6. In terms of biological role, catalyzes 2 different reactions between oxygen and the acireductone 1,2-dihydroxy-3-keto-5-methylthiopentene (DHK-MTPene) depending upon the metal bound in the active site. Fe-containing acireductone dioxygenase (Fe-ARD) produces formate and 2-keto-4-methylthiobutyrate (KMTB), the alpha-ketoacid precursor of methionine in the methionine recycle pathway. Ni-containing acireductone dioxygenase (Ni-ARD) produces methylthiopropionate, carbon monoxide and formate, and does not lie on the methionine recycle pathway. In Coprinopsis cinerea (strain Okayama-7 / 130 / ATCC MYA-4618 / FGSC 9003) (Inky cap fungus), this protein is Acireductone dioxygenase 1.